The following is a 190-amino-acid chain: dCTP deaminase, dUMP-forming (190 aa).

DCTP-binding positions include 101–106, Asp119, 127–129, Gln148, Tyr162, and Gln174; these read KSSLGR and TLE. The Proton donor/acceptor role is filled by Glu129. The tract at residues 161–190 is disordered; sequence PYGSSGVGSKYQGQRGPTPSRSYQNFIRST. Over residues 171–190 the composition is skewed to polar residues; the sequence is YQGQRGPTPSRSYQNFIRST.

It belongs to the dCTP deaminase family. Homotrimer.

It catalyses the reaction dCTP + 2 H2O = dUMP + NH4(+) + diphosphate. It functions in the pathway pyrimidine metabolism; dUMP biosynthesis; dUMP from dCTP: step 1/1. Bifunctional enzyme that catalyzes both the deamination of dCTP to dUTP and the hydrolysis of dUTP to dUMP without releasing the toxic dUTP intermediate. This is dCTP deaminase, dUMP-forming from Mycobacterium marinum (strain ATCC BAA-535 / M).